The following is a 250-amino-acid chain: Non-specific acid phosphatase (250 aa).

A signal peptide spans 1–20; sequence MKSRYLVFFLPLIVAKYTSA.

It belongs to the class A bacterial acid phosphatase family. In terms of assembly, homodimer.

The protein localises to the periplasm. The catalysed reaction is a phosphate monoester + H2O = an alcohol + phosphate. In Salmonella typhimurium (strain LT2 / SGSC1412 / ATCC 700720), this protein is Non-specific acid phosphatase (phoN).